We begin with the raw amino-acid sequence, 281 residues long: Pantothenate synthetase (281 aa).

Position 30-37 (30-37 (MGNLHQGH)) interacts with ATP. His37 acts as the Proton donor in catalysis. Position 61 (Gln61) interacts with (R)-pantoate. Gln61 provides a ligand contact to beta-alanine. An ATP-binding site is contributed by 149–152 (GNKD). Gln155 contributes to the (R)-pantoate binding site. ATP is bound by residues Ile178 and 186–189 (MSSR).

This sequence belongs to the pantothenate synthetase family. In terms of assembly, homodimer.

The protein localises to the cytoplasm. It carries out the reaction (R)-pantoate + beta-alanine + ATP = (R)-pantothenate + AMP + diphosphate + H(+). It participates in cofactor biosynthesis; (R)-pantothenate biosynthesis; (R)-pantothenate from (R)-pantoate and beta-alanine: step 1/1. Its function is as follows. Catalyzes the condensation of pantoate with beta-alanine in an ATP-dependent reaction via a pantoyl-adenylate intermediate. In Shewanella sp. (strain ANA-3), this protein is Pantothenate synthetase.